Consider the following 342-residue polypeptide: S-adenosylmethionine:tRNA ribosyltransferase-isomerase (342 aa).

It belongs to the QueA family. In terms of assembly, monomer.

The protein localises to the cytoplasm. It catalyses the reaction 7-aminomethyl-7-carbaguanosine(34) in tRNA + S-adenosyl-L-methionine = epoxyqueuosine(34) in tRNA + adenine + L-methionine + 2 H(+). Its pathway is tRNA modification; tRNA-queuosine biosynthesis. In terms of biological role, transfers and isomerizes the ribose moiety from AdoMet to the 7-aminomethyl group of 7-deazaguanine (preQ1-tRNA) to give epoxyqueuosine (oQ-tRNA). This chain is S-adenosylmethionine:tRNA ribosyltransferase-isomerase, found in Oceanobacillus iheyensis (strain DSM 14371 / CIP 107618 / JCM 11309 / KCTC 3954 / HTE831).